The sequence spans 89 residues: Probable Fe(2+)-trafficking protein (89 aa).

It belongs to the Fe(2+)-trafficking protein family.

Functionally, could be a mediator in iron transactions between iron acquisition and iron-requiring processes, such as synthesis and/or repair of Fe-S clusters in biosynthetic enzymes. The chain is Probable Fe(2+)-trafficking protein from Hahella chejuensis (strain KCTC 2396).